A 376-amino-acid chain; its full sequence is Copper-containing nitrite reductase (376 aa).

The tat-type signal signal peptide spans 1–33; that stretch reads MSEQFQMTRRSMLAGAAIAGAVTPLIGAVSAHA. Plastocyanin-like domains lie at 98-193 and 258-359; these read MTFN…IMVL and GAVG…FAVT. Cu cation-binding residues include H131, H136, H171, C172, H181, M186, and H342.

Belongs to the multicopper oxidase family. Homotrimer. Cu(2+) is required as a cofactor. The cofactor is Cu(+). Requires FAD as cofactor. Predicted to be exported by the Tat system. The position of the signal peptide cleavage has not been experimentally proven.

It is found in the periplasm. It carries out the reaction nitric oxide + Fe(III)-[cytochrome c] + H2O = Fe(II)-[cytochrome c] + nitrite + 2 H(+). It participates in nitrogen metabolism; nitrate reduction (denitrification); dinitrogen from nitrate: step 2/4. This chain is Copper-containing nitrite reductase (nirK), found in Rhizobium meliloti (strain 1021) (Ensifer meliloti).